The chain runs to 742 residues: Enhancer of polycomb-like protein 1 (742 aa).

Positions 1-27 are enriched in polar residues; sequence MPTPSAQLDQGIISSNGGTSGVSASST. Disordered stretches follow at residues 1 to 28, 416 to 446, and 718 to 742; these read MPTPSAQLDQGIISSNGGTSGVSASSTR, RQQSQLQKLDQQQRQQQQQQQPQINGAQCQQ, and KKLVNAQRQQQQQQQEQQEQEHQQA. Residues 724–734 are compositionally biased toward low complexity; sequence QRQQQQQQQEQ.

Belongs to the enhancer of polycomb family. In terms of assembly, component of the NuA4 histone acetyltransferase complex.

It is found in the nucleus. In terms of biological role, component of the NuA4 histone acetyltransferase complex which is involved in transcriptional activation of selected genes principally by acetylation of nucleosomal histone H4 and H2A. The NuA4 complex is also involved in DNA repair. Involved in gene silencing by neighboring heterochromatin, blockage of the silencing spreading along the chromosome, and required for cell cycle progression through G2/M. This Eremothecium gossypii (strain ATCC 10895 / CBS 109.51 / FGSC 9923 / NRRL Y-1056) (Yeast) protein is Enhancer of polycomb-like protein 1 (EPL1).